Here is a 319-residue protein sequence, read N- to C-terminus: CBBY-like protein (319 aa).

The N-terminal 65 residues, 1-65 (MATVKISLSL…YRSSRSVGVT (65 aa)), are a transit peptide targeting the chloroplast. Residue aspartate 82 is the Nucleophile of the active site. 2 residues coordinate Mg(2+): aspartate 82 and aspartate 84. Substrate is bound at residue aspartate 82. The Proton donor role is filled by aspartate 84. Substrate contacts are provided by residues glutamate 91, 125-129 (GGKER), 158-161 (HKQK), and 198-204 (STSNEKA). A Mg(2+)-binding site is contributed by aspartate 258.

It belongs to the HAD-like hydrolase superfamily. DOG/GPP family. It depends on Mg(2+) as a cofactor.

Its subcellular location is the plastid. It localises to the chloroplast. The catalysed reaction is D-xylulose 1,5-bisphosphate + H2O = D-xylulose 5-phosphate + phosphate. Functionally, highly selective xylulose-1,5-bisphosphate (XuBP) phosphatase. Also shows activity towards ribulose-1,5-bisphosphate (RuBP) and fructose-1,6-bisphosphate (FBP), but not towards fructose-6-phosphate (F6P) or ribulose-5-phosphate (Ru5P). Degrades xylulose-1,5-bisphosphate, a potent inhibitor of rubisco produced by the rubisco itself. The polypeptide is CBBY-like protein (Arabidopsis thaliana (Mouse-ear cress)).